Here is a 388-residue protein sequence, read N- to C-terminus: Protein-glutamate methylesterase/protein-glutamine glutaminase 4 (388 aa).

In terms of domain architecture, Response regulatory spans 4–121 (KVLVVDDSGF…SGDASKIKRL (118 aa)). Asp-55 bears the 4-aspartylphosphate mark. The interval 137-196 (SGASAPASVPQPAKPAAPIPVREPPKPAAPVTRPAEPRAKAPPAKPEPKPEVKAAKSRRT) is disordered. Residues 148–164 (PAKPAAPIPVREPPKPA) are compositionally biased toward pro residues. The 192-residue stretch at 197–388 (PRQDYKVVLI…FAPRLIDGVG (192 aa)) folds into the CheB-type methylesterase domain. Active-site residues include Ser-209, His-236, and Asp-332.

The protein belongs to the CheB family. Phosphorylated by CheA. Phosphorylation of the N-terminal regulatory domain activates the methylesterase activity.

The protein resides in the cytoplasm. The enzyme catalyses [protein]-L-glutamate 5-O-methyl ester + H2O = L-glutamyl-[protein] + methanol + H(+). It catalyses the reaction L-glutaminyl-[protein] + H2O = L-glutamyl-[protein] + NH4(+). In terms of biological role, involved in chemotaxis. Part of a chemotaxis signal transduction system that modulates chemotaxis in response to various stimuli. Catalyzes the demethylation of specific methylglutamate residues introduced into the chemoreceptors (methyl-accepting chemotaxis proteins or MCP) by CheR. Also mediates the irreversible deamidation of specific glutamine residues to glutamic acid. The sequence is that of Protein-glutamate methylesterase/protein-glutamine glutaminase 4 from Hahella chejuensis (strain KCTC 2396).